A 508-amino-acid chain; its full sequence is Phytepsin (508 aa).

The first 27 residues, Met1 to Ala27, serve as a signal peptide directing secretion. Positions Glu28 to Arg66 are cleaved as a propeptide — activation peptide. Residues Tyr84–Ala505 form the Peptidase A1 domain. The active site involves Asp102. Intrachain disulfides connect Cys115–Cys121 and Cys280–Cys284. The active site involves Asp289. The Saposin B-type domain occupies Val314–Pro419. 4 disulfides stabilise this stretch: Cys319/Cys413, Cys344/Cys385, Cys350/Cys382, and Cys427/Cys464. Residue Asn399 is glycosylated (N-linked (GlcNAc...) asparagine).

It belongs to the peptidase A1 family. As to quaternary structure, heterodimer of two subunits (29 kDa and 11 kDa) processed from the precursor molecule. A large enzyme (32 kDa and 16 kDa) is an intermediate precursor form. In terms of tissue distribution, embryo and leaf.

The protein resides in the vacuole. The enzyme catalyses Prefers hydrophobic residues Phe, Val, Ile, Leu, and Ala at P1 and P1', but also cleaves -Phe-|-Asp- and -Asp-|-Asp- bonds in 2S albumin from plant seeds.. Involved in the breakdown of propeptides of storage proteins in protein-storage vacuoles. In Hordeum vulgare (Barley), this protein is Phytepsin.